Consider the following 197-residue polypeptide: Proteasome subunit beta 1 (197 aa).

The propeptide at 1 to 6 (MNRKTG) is removed in mature form; by autocatalysis. Residue Thr7 is the Nucleophile of the active site.

It belongs to the peptidase T1B family. The 20S proteasome core is composed of 14 alpha and 14 beta subunits that assemble into four stacked heptameric rings, resulting in a barrel-shaped structure. The two inner rings, each composed of seven catalytic beta subunits, are sandwiched by two outer rings, each composed of seven alpha subunits. The catalytic chamber with the active sites is on the inside of the barrel. Has a gated structure, the ends of the cylinder being occluded by the N-termini of the alpha-subunits. Is capped at one or both ends by the proteasome regulatory ATPase, PAN.

The protein resides in the cytoplasm. It carries out the reaction Cleavage of peptide bonds with very broad specificity.. The formation of the proteasomal ATPase PAN-20S proteasome complex, via the docking of the C-termini of PAN into the intersubunit pockets in the alpha-rings, triggers opening of the gate for substrate entry. Interconversion between the open-gate and close-gate conformations leads to a dynamic regulation of the 20S proteasome proteolysis activity. Its function is as follows. Component of the proteasome core, a large protease complex with broad specificity involved in protein degradation. This chain is Proteasome subunit beta 1, found in Pyrococcus horikoshii (strain ATCC 700860 / DSM 12428 / JCM 9974 / NBRC 100139 / OT-3).